The sequence spans 500 residues: Probable cytosol aminopeptidase (500 aa).

Mn(2+) is bound by residues K268 and D273. The active site involves K280. D291, D350, and E352 together coordinate Mn(2+). R354 is an active-site residue.

The protein belongs to the peptidase M17 family. It depends on Mn(2+) as a cofactor.

It localises to the cytoplasm. It carries out the reaction Release of an N-terminal amino acid, Xaa-|-Yaa-, in which Xaa is preferably Leu, but may be other amino acids including Pro although not Arg or Lys, and Yaa may be Pro. Amino acid amides and methyl esters are also readily hydrolyzed, but rates on arylamides are exceedingly low.. It catalyses the reaction Release of an N-terminal amino acid, preferentially leucine, but not glutamic or aspartic acids.. In terms of biological role, presumably involved in the processing and regular turnover of intracellular proteins. Catalyzes the removal of unsubstituted N-terminal amino acids from various peptides. The chain is Probable cytosol aminopeptidase from Alkaliphilus metalliredigens (strain QYMF).